The sequence spans 89 residues: Small ribosomal subunit protein uS14A (89 aa).

Belongs to the universal ribosomal protein uS14 family. In terms of assembly, part of the 30S ribosomal subunit. Contacts proteins S3 and S10.

Binds 16S rRNA, required for the assembly of 30S particles and may also be responsible for determining the conformation of the 16S rRNA at the A site. This Bacillus licheniformis (strain ATCC 14580 / DSM 13 / JCM 2505 / CCUG 7422 / NBRC 12200 / NCIMB 9375 / NCTC 10341 / NRRL NRS-1264 / Gibson 46) protein is Small ribosomal subunit protein uS14A.